The chain runs to 1322 residues: Myosin-1 (1322 aa).

One can recognise a Myosin motor domain in the interval 42–728 (AGVSDMTLLT…TLFALETMRD (687 aa)). 135-142 (GESGAGKT) lines the ATP pocket. Residue serine 369 is modified to Phosphoserine. Residues 417 to 499 (VIGVLDIYGF…PGIFSALNDA (83 aa)) form an actin-binding region. 2 consecutive IQ domains span residues 732-752 (HNMA…REES) and 753-778 (ARRI…YGHQ). One can recognise a TH1 domain in the interval 786–980 (RRRFSLISMR…SGEPPTSVSR (195 aa)). Disordered stretches follow at residues 966 to 1090 (IVSV…MPSY) and 1137 to 1162 (VQQL…ATPA). 2 stretches are compositionally biased toward low complexity: residues 1000–1017 (SRPV…PTTT) and 1027–1056 (GGTA…ASGA). Composition is skewed to polar residues over residues 1078-1087 (PATSAPSSGM) and 1137-1148 (VQQLGSSSTAQT). The 60-residue stretch at 1184-1243 (RRLPRYRALYDFETQEAGELPLRTGDIVELEEKEENGWWLVKKGSTEGWSPADYLELIAE) folds into the SH3 domain. The disordered stretch occupies residues 1246 to 1300 (AAKPRPPPPAKPASAKPAAAPARVSQSSVTSSWTPPDSHAAPVAVMPGMGDPGGF). A compositionally biased stretch (low complexity) spans 1257–1267 (PASAKPAAAPA). A compositionally biased stretch (polar residues) spans 1269–1280 (VSQSSVTSSWTP).

This sequence belongs to the TRAFAC class myosin-kinesin ATPase superfamily. Myosin family. Post-translationally, phosphorylation of the TEDS site (Ser-369) is required for the polarization of the actin cytoskeleton. Phosphorylation probably activates the myosin-I ATPase activity.

The protein localises to the cytoplasm. It localises to the cytoskeleton. It is found in the actin patch. Type-I myosin implicated in the organization of the actin cytoskeleton. Required for proper actin cytoskeleton polarization. At the cell cortex, assembles in patch-like structures together with proteins from the actin-polymerizing machinery and promotes actin assembly. Functions as actin nucleation-promoting factor (NPF) for the Arp2/3 complex. The polypeptide is Myosin-1 (MYO1) (Malassezia globosa (strain ATCC MYA-4612 / CBS 7966) (Dandruff-associated fungus)).